Reading from the N-terminus, the 574-residue chain is ATP-dependent lipid A-core flippase (574 aa).

Transmembrane regions (helical) follow at residues 11 to 31 (LLSY…GFGI), 60 to 80 (WFPL…FMGG), 156 to 176 (YTNW…GVLV), and 244 to 264 (LNSP…VWLA). The 282-residue stretch at 23 to 304 (LLVLVGFGIN…LTDVNEKLQR (282 aa)) folds into the ABC transmembrane type-1 domain. The ABC transporter domain maps to 335–570 (VRFDHVTLEY…QGAYFQLHQR (236 aa)). Residue 368–375 (GRSGAGKT) participates in ATP binding.

Belongs to the ABC transporter superfamily. Lipid exporter (TC 3.A.1.106) family. As to quaternary structure, homodimer.

It is found in the cell inner membrane. The catalysed reaction is ATP + H2O + lipid A-core oligosaccharideSide 1 = ADP + phosphate + lipid A-core oligosaccharideSide 2.. In terms of biological role, involved in lipopolysaccharide (LPS) biosynthesis. Translocates lipid A-core from the inner to the outer leaflet of the inner membrane. Transmembrane domains (TMD) form a pore in the inner membrane and the ATP-binding domain (NBD) is responsible for energy generation. This is ATP-dependent lipid A-core flippase from Acinetobacter baylyi (strain ATCC 33305 / BD413 / ADP1).